The primary structure comprises 318 residues: MIEIKDVGKIFGDTKVLENISLDIKEGEVFGIIGRSGAGKSTLLRCLNGLENYDEGSIKVMDKEVKDLNNIELRKLRKDMGMIFQGFNIMNSKNIYDNVALPLQVWKKDKKYIDEKVRELLKLVGLENKAKSYPRELSGGQKQRVAIARALTMEPKVLLCDEATSALDPETTKSILKLIQKINKELKITVVVVTHQMEVIKEICNRIALIDGRKVSAYGEVKDLFLRPEGELKKIIEQEELLPNEGVNIKLFFPSNASQQSVITSMARELNVDFSIVWGKLESFRKEVLGSLIINIEEDKKVAICEYLNKKSILWEVI.

Residues 2–237 (IEIKDVGKIF…PEGELKKIIE (236 aa)) enclose the ABC transporter domain. 34 to 41 (GRSGAGKS) contacts ATP.

It belongs to the ABC transporter superfamily. Methionine importer (TC 3.A.1.24) family. The complex is composed of two ATP-binding proteins (MetN), two transmembrane proteins (MetI) and a solute-binding protein (MetQ).

Its subcellular location is the cell membrane. The catalysed reaction is L-methionine(out) + ATP + H2O = L-methionine(in) + ADP + phosphate + H(+). The enzyme catalyses D-methionine(out) + ATP + H2O = D-methionine(in) + ADP + phosphate + H(+). Part of the ABC transporter complex MetNIQ involved in methionine import. Responsible for energy coupling to the transport system. This chain is Methionine import ATP-binding protein MetN, found in Clostridium tetani (strain Massachusetts / E88).